Here is a 105-residue protein sequence, read N- to C-terminus: MATLAQQKIRIRLKAFDRRLLDTSCEKIVDTANRTDATAIGPIPLPTKRRIYCVLRSPHVDKDSREHFETRTHRRIIDIYQPSSKTIDALMKLDLPAGVEIEVKL.

It belongs to the universal ribosomal protein uS10 family. In terms of assembly, part of the 30S ribosomal subunit.

Its function is as follows. Involved in the binding of tRNA to the ribosomes. The chain is Small ribosomal subunit protein uS10 from Crocosphaera subtropica (strain ATCC 51142 / BH68) (Cyanothece sp. (strain ATCC 51142)).